We begin with the raw amino-acid sequence, 192 residues long: E3 ubiquitin-protein ligase RNF183 (192 aa).

The Cytoplasmic portion of the chain corresponds to 1–161; it reads MAEQQGRELE…RECFRNPQFR (161 aa). The segment at 13 to 60 adopts an RING-type zinc-finger fold; the sequence is CPVCWNPFNNTFHTPKMLDCCHSFCVECLAHLSLVTPARRRLLCPLCR. The chain crosses the membrane as a helical; Anchor for type IV membrane protein span at residues 162-182; sequence IFAYLMAVILSVTLLLIFSIF. Over 183–192 the chain is Lumenal; sequence WTKQFLWGVG.

Interacts with FATE1. Interacts with SEC16A. Interacts with BCL2L1. Post-translationally, autoubiquitinated (in vitro). As to expression, kidney and testis.

It localises to the endoplasmic reticulum membrane. It is found in the endoplasmic reticulum. The protein resides in the golgi apparatus. The protein localises to the cis-Golgi network membrane. Its subcellular location is the lysosome membrane. The catalysed reaction is S-ubiquitinyl-[E2 ubiquitin-conjugating enzyme]-L-cysteine + [acceptor protein]-L-lysine = [E2 ubiquitin-conjugating enzyme]-L-cysteine + N(6)-ubiquitinyl-[acceptor protein]-L-lysine.. It participates in protein modification; protein ubiquitination. In terms of biological role, acts as an E3 ubiquitin ligase catalyzing the covalent attachment of ubiquitin moieties onto substrate proteins. Triggers apoptosis in response to prolonged ER stress by mediating the polyubiquitination and subsequent proteasomal degradation of BCL2L1. May collaborate with FATE1 to restrain BIK protein levels thus regulating apoptotic signaling. This chain is E3 ubiquitin-protein ligase RNF183 (RNF183), found in Homo sapiens (Human).